Reading from the N-terminus, the 306-residue chain is Methionyl-tRNA formyltransferase (306 aa).

108 to 111 (SLLP) serves as a coordination point for (6S)-5,6,7,8-tetrahydrofolate.

It belongs to the Fmt family.

The enzyme catalyses L-methionyl-tRNA(fMet) + (6R)-10-formyltetrahydrofolate = N-formyl-L-methionyl-tRNA(fMet) + (6S)-5,6,7,8-tetrahydrofolate + H(+). Its function is as follows. Attaches a formyl group to the free amino group of methionyl-tRNA(fMet). The formyl group appears to play a dual role in the initiator identity of N-formylmethionyl-tRNA by promoting its recognition by IF2 and preventing the misappropriation of this tRNA by the elongation apparatus. The chain is Methionyl-tRNA formyltransferase from Paenarthrobacter aurescens (strain TC1).